Reading from the N-terminus, the 813-residue chain is Protein tramtrack, alpha isoform (813 aa).

The region spanning 33–98 is the BTB domain; sequence TDVTLAVEGQ…MYRGEVSVDQ (66 aa). Disordered regions lie at residues 118–148, 171–324, 356–428, and 526–585; these read EVND…PQLQ, ANAG…GPSE, TTPA…MPKK, and AGLP…LDDQ. The segment covering 125–145 has biased composition (low complexity); sequence SPAAAAAGAGATGSESTATTP. The span at 176-187 shows a compositional bias: polar residues; that stretch reads TPTLPVQPSLLS. Residues 192–201 show a composition bias toward basic residues; the sequence is PKRKRGRPRK. Phosphoserine is present on residues Ser203, Ser205, and Ser206. Residue Thr209 is modified to Phosphothreonine. Positions 254–285 are enriched in basic and acidic residues; that stretch reads HTDDLNESRDSLPSKRSKNSKDHRVVSHHEDN. Composition is skewed to polar residues over residues 302 to 324, 356 to 369, and 377 to 388; these read LFGS…GPSE, TTPA…TPTK, and ATGSNNSNSLLK. Residues 560-578 show a composition bias toward basic residues; sequence SGKKGAKRPIQRRRVRRKA. 2 C2H2-type zinc fingers span residues 610-638 and 646-669; these read YRCT…FLYH and FPCP…KMTH. At Ser682 the chain carries Phosphoserine.

As to quaternary structure, interacts with CoRest/CG33525, suggesting that it acts by recruiting a CoRest-containing corepressor complex. Interacts with phyl.

Its subcellular location is the nucleus. Binds to a number of sites in the transcriptional regulatory region of ftz. Isoform alpha is required to repress genes that promote the R7 cell fate. Probable repressor of the transcription of the segmentation genes ftz, eve, h, odd, run, and en. May bind to the region 5'-AGGG[CT]GG-3'. Degradation of ttk is directed by binding of sinah or sina, via the adapter molecule phyl which binds to the BTB domain of ttk. The sequence is that of Protein tramtrack, alpha isoform (ttk) from Drosophila melanogaster (Fruit fly).